The sequence spans 117 residues: Ig heavy chain V region G4 (117 aa).

Residues 1–19 (MTHWLCFTLALVAVRGVLS) form the signal peptide. The framework-1 stretch occupies residues 20–49 (EIQLVESGGAIRKPGDSLRLSCKASGFTFS). Cysteines 41 and 115 form a disulfide. Residues 50 to 54 (DTWMA) form a complementarity-determining-1 region. Residues 55 to 68 (WARQPPGKGLQWVG) form a framework-2 region. Residues 69–85 (EINGNSETIRYAPEVKG) are complementarity-determining-2. The segment at 86 to 117 (RLTISRDNTQNLLFLQISSLKPEDTATYYCAR) is framework-3.

The polypeptide is Ig heavy chain V region G4 (G4) (Caiman crocodilus (Spectacled caiman)).